The chain runs to 50 residues: Putative protein HokG (50 aa).

A helical membrane pass occupies residues 5–25 (YALVAIIVLCCTVLGFTLMVG).

This sequence belongs to the Hok/Gef family.

The protein localises to the cell inner membrane. Functionally, toxic component of a type I toxin-antitoxin (TA) system. When overexpressed kills cells within minutes; causes collapse of the transmembrane potential and arrest of respiration. Its toxic effect is probably neutralized by an antisense antitoxin Sok RNA. The chain is Putative protein HokG (hokG) from Escherichia coli O157:H7.